Reading from the N-terminus, the 433-residue chain is Serine carboxypeptidase-like 11 (433 aa).

The N-terminal stretch at 1 to 21 (MELTLKLLVLLLFILNHHVGS) is a signal peptide. Disulfide bonds link C80–C322, C243–C257, and C281–C288. N101 carries an N-linked (GlcNAc...) asparagine glycan. S176 is an active-site residue. N342 carries an N-linked (GlcNAc...) asparagine glycan. D358 is an active-site residue. N-linked (GlcNAc...) asparagine glycosylation occurs at N374. H411 is an active-site residue.

The protein belongs to the peptidase S10 family. Ubiquitous.

The protein resides in the secreted. Probable carboxypeptidase. In Arabidopsis thaliana (Mouse-ear cress), this protein is Serine carboxypeptidase-like 11 (SCPL11).